A 266-amino-acid chain; its full sequence is MKAVVLTLAVLFLTGSQARHFWQQDEPQSPWDRVKDLATVYVDVVKDGGRDYVAQFESSALGKQLNLKLLDNWDSLSSTVAKLREQIGPVTQEFWDNLEKETEVLRQEMNKDLEEVKKKVQPYLDEFQSKWHEEVELYRQKVAPLGAELREGARQKLQELQEKLSPLGEELRDRARTHVDALRAQLAPYGEQLRERLAARLQALKEGGGAALTEYRAKASEHLSALREKAKPALEDLRQGLLPVLENFRVSLLAAVDEATKKLNSQ.

The signal sequence occupies residues 1-18; sequence MKAVVLTLAVLFLTGSQA. Tandem repeats lie at residues 67–88 and 89–110. Positions 67–266 are 10 X approximate tandem repeats; sequence LKLLDNWDSL…DEATKKLNSQ (200 aa). Methionine 109 carries the methionine sulfoxide modification. One copy of the 3; half-length repeat lies at 111 to 121; the sequence is KDLEEVKKKVQ. Repeat copies occupy residues 122–143, 144–165, 166–187, 188–209, and 210–231. Residues 232-242 form a 9; half-length repeat; the sequence is PALEDLRQGLL. Repeat unit 10 spans residues 243-266; that stretch reads PVLENFRVSLLAAVDEATKKLNSQ.

Belongs to the apolipoprotein A1/A4/E family. Homodimer. Interacts with APOA1BP and CLU. Component of a sperm activating protein complex (SPAP), consisting of APOA1, an immunoglobulin heavy chain, an immunoglobulin light chain and albumin. Interacts with NDRG1. Interacts with SCGB3A2. Interacts with NAXE and YJEFN3. Post-translationally, glycosylated. Palmitoylated. In terms of processing, phosphorylation sites are present in the extracellular medium.

It localises to the secreted. Functionally, participates in the reverse transport of cholesterol from tissues to the liver for excretion by promoting cholesterol efflux from tissues and by acting as a cofactor for the lecithin cholesterol acyltransferase (LCAT). As part of the SPAP complex, activates spermatozoa motility. This is Apolipoprotein A-I (APOA1) from Leptonychotes weddellii (Weddell seal).